The chain runs to 316 residues: Melanocyte-stimulating hormone receptor (316 aa).

Over 1–37 (MAVQGSQRRLLGSLNSTPTAIPQLGLAANQTGARCLE) the chain is Extracellular. N29 is a glycosylation site (N-linked (GlcNAc...) asparagine). The helical transmembrane segment at 38–63 (VSIPDGLFLSLGLVSLVENVLVVATI) threads the bilayer. The Cytoplasmic portion of the chain corresponds to 64-72 (AKNRNLHSP). Residues 73–93 (MYCFICCLALSDLLVSGSNVV) form a helical membrane-spanning segment. Topologically, residues 94-117 (DTLLLLLEAGALAARAAVLQQLDN) are extracellular. The chain crosses the membrane as a helical span at residues 118–139 (VIDVITCSSMLSSLCFLGAIAV). Over 140–162 (DRYISIFYALRYRSIVTLPRARR) the chain is Cytoplasmic. Residues 163 to 182 (AVAAIWVASVLFSTLFIAYY) form a helical membrane-spanning segment. Topologically, residues 183–190 (DHTAVLLC) are extracellular. The helical transmembrane segment at 191 to 210 (LVVFFLAMLVLMAVLYVHML) threads the bilayer. The Cytoplasmic portion of the chain corresponds to 211-239 (ARACQHAQGIARLHKRQRPVHKGFGLKGP). Residues 240–265 (VTLTILLGIFFLCWGPFFLHLTLIVL) traverse the membrane as a helical segment. The Extracellular segment spans residues 266–278 (CPEHPTCGCIFKN). Residues 279–299 (FNLFLALIICNAIIDPLIYAF) traverse the membrane as a helical segment. Residues 300 to 316 (HSQELRRTLKEVLTCSW) lie on the Cytoplasmic side of the membrane. Residue C314 is the site of S-palmitoyl cysteine attachment.

It belongs to the G-protein coupled receptor 1 family. In terms of assembly, interacts with MGRN1, but does not undergo MGRN1-mediated ubiquitination; this interaction competes with GNAS-binding and thus inhibits agonist-induced cAMP production. Interacts with OPN3; the interaction results in a decrease in MC1R-mediated cAMP signaling and ultimately a decrease in melanin production in melanocytes.

The protein resides in the cell membrane. Functionally, receptor for MSH (alpha, beta and gamma) and ACTH. The activity of this receptor is mediated by G proteins which activate adenylate cyclase. Mediates melanogenesis, the production of eumelanin (black/brown) and phaeomelanin (red/yellow), via regulation of cAMP signaling in melanocytes. This Gorilla gorilla gorilla (Western lowland gorilla) protein is Melanocyte-stimulating hormone receptor (MC1R).